Here is a 473-residue protein sequence, read N- to C-terminus: Probable DNA N(6)-methyladenine demethylase ALKBH1B (473 aa).

A 2-oxoglutarate-binding site is contributed by 357–359; it reads NFY. Positions 368, 391, and 449 each coordinate Fe cation. 461–465 is a 2-oxoglutarate binding site; the sequence is RLFFR.

This sequence belongs to the alkB family. Requires Fe(2+) as cofactor. Undetectable.

The enzyme catalyses an N(6)-methyl-2'-deoxyadenosine in DNA + 2-oxoglutarate + O2 = a 2'-deoxyadenosine in DNA + formaldehyde + succinate + CO2. Dioxygenase that may catalyzes DNA N(6)-methyladenine (6 mA) demethylation. Requires molecular oxygen, alpha-ketoglutarate and iron. The protein is Probable DNA N(6)-methyladenine demethylase ALKBH1B of Arabidopsis thaliana (Mouse-ear cress).